Reading from the N-terminus, the 236-residue chain is Ascorbate-specific transmembrane electron transporter 1 (236 aa).

The Cytoplasmic portion of the chain corresponds to methionine 1–proline 11. A helical transmembrane segment spans residues phenylalanine 12–isoleucine 32. The region spanning alanine 15–isoleucine 219 is the Cytochrome b561 domain. Residues glutamine 33–asparagine 50 are Extracellular-facing. A helical transmembrane segment spans residues valine 51–tyrosine 71. Histidine 52 lines the heme b pocket. Residue alanine 67 to proline 75 coordinates L-ascorbate. Residues arginine 72–leucine 84 lie on the Cytoplasmic side of the membrane. Residues isoleucine 85–phenylalanine 105 form a helical membrane-spanning segment. Positions 86 and 120 each coordinate heme b. Over lysine 106–tryptophan 122 the chain is Extracellular. A monodehydro-L-ascorbate radical-binding site is contributed by leucine 116–isoleucine 125. Residues isoleucine 123–phenylalanine 143 form a helical membrane-spanning segment. Residues phenylalanine 144 to lysine 153 are Cytoplasmic-facing. A helical transmembrane segment spans residues glycine 154–alanine 174. Residue histidine 159 participates in heme b binding. Residues glutamate 175–asparagine 201 lie on the Extracellular side of the membrane. The helical transmembrane segment at phenylalanine 202–valine 222 threads the bilayer. Over arginine 223–asparagine 236 the chain is Cytoplasmic.

Heme b is required as a cofactor.

The protein resides in the membrane. Inhibited by diethylpyrocarbonate. Two-heme-containing cytochrome. Catalyzes ascorbate-dependent trans-membrane electron transfer by utilizing a concerted H(+)/e(-) transfer mechanism. The chain is Ascorbate-specific transmembrane electron transporter 1 (ZCYB) from Zea mays (Maize).